The sequence spans 200 residues: Proteasome subunit beta 2 (200 aa).

Met-1 is a propeptide (removed in mature form; by autocatalysis). The active-site Nucleophile is the Thr-2.

It belongs to the peptidase T1B family. As to quaternary structure, the 20S proteasome core is composed of 14 alpha and 14 beta subunits that assemble into four stacked heptameric rings, resulting in a barrel-shaped structure. The two inner rings, each composed of seven catalytic beta subunits, are sandwiched by two outer rings, each composed of seven alpha subunits. The catalytic chamber with the active sites is on the inside of the barrel. Has a gated structure, the ends of the cylinder being occluded by the N-termini of the alpha-subunits. Is capped at one or both ends by the proteasome regulatory ATPase, PAN.

The protein resides in the cytoplasm. It carries out the reaction Cleavage of peptide bonds with very broad specificity.. With respect to regulation, the formation of the proteasomal ATPase PAN-20S proteasome complex, via the docking of the C-termini of PAN into the intersubunit pockets in the alpha-rings, triggers opening of the gate for substrate entry. Interconversion between the open-gate and close-gate conformations leads to a dynamic regulation of the 20S proteasome proteolysis activity. Its function is as follows. Component of the proteasome core, a large protease complex with broad specificity involved in protein degradation. This chain is Proteasome subunit beta 2, found in Pyrobaculum islandicum (strain DSM 4184 / JCM 9189 / GEO3).